Reading from the N-terminus, the 1485-residue chain is Chromosome partition protein MukB (1485 aa).

Position 34–41 (34–41 (GGNGAGKS)) interacts with ATP. Coiled coils occupy residues 337-480 (LNLV…QAYQ) and 509-605 (QHLA…PVWL). The flexible hinge stretch occupies residues 666 to 783 (PSGAEDARLI…EVPLFGRAAR (118 aa)). Coiled coils occupy residues 835–915 (EAEI…IQQH) and 977–1116 (GMLT…AKAG).

It belongs to the SMC family. MukB subfamily. Homodimerization via its hinge domain. Binds to DNA via its C-terminal region. Interacts, and probably forms a ternary complex, with MukE and MukF via its C-terminal region. The complex formation is stimulated by calcium or magnesium. Interacts with tubulin-related protein FtsZ.

The protein resides in the cytoplasm. Its subcellular location is the nucleoid. Its function is as follows. Plays a central role in chromosome condensation, segregation and cell cycle progression. Functions as a homodimer, which is essential for chromosome partition. Involved in negative DNA supercoiling in vivo, and by this means organize and compact chromosomes. May achieve or facilitate chromosome segregation by condensation DNA from both sides of a centrally located replisome during cell division. The polypeptide is Chromosome partition protein MukB (Yersinia pseudotuberculosis serotype O:3 (strain YPIII)).